Reading from the N-terminus, the 226-residue chain is UPF0173 metal-dependent hydrolase SRU_1937 (226 aa).

The protein belongs to the UPF0173 family.

This chain is UPF0173 metal-dependent hydrolase SRU_1937, found in Salinibacter ruber (strain DSM 13855 / M31).